The following is a 509-amino-acid chain: Apurinic-apyrimidinic endonuclease 1 (509 aa).

Residues 1-24 (MPRHCCCFVFHFLLYMLLINIVKN) form the signal peptide. The tract at residues 144–188 (EEKDEECDEKTKQDNNKENIKNETIVQKKKIDKNNKTKEKIKTKS) is disordered. Basic and acidic residues-rich tracts occupy residues 152 to 164 (EKTK…ENIK) and 175 to 188 (DKNN…KTKS). Positions 291, 331, 367, 401, 404, 438, 451, 453, and 483 each coordinate Zn(2+). Position 404 (His404) interacts with Mn(2+). 2 residues coordinate Mn(2+): Asp451 and His453.

This sequence belongs to the AP endonuclease 2 family. It depends on Zn(2+) as a cofactor. Requires Mn(2+) as cofactor. May be proteolytically cleaved.

It is found in the mitochondrion. Plays a role in mitochondrial DNA base excision repair (BER) pathway induced by oxidative stress. Has apurinic/apyrimidinic (AP) endonuclease activity towards double-stranded DNA (dsDNA) with a preference for C as opposite base. Has 3'-phosphatase activity; removes 3'-phosphate from blunt-end, recessed, and gapped DNA templates and thus, removes 3'-blocks for DNA polymerase activity during BER. Lacks 3'-5' exonuclease activity and does not cleave damaged bases by nucleotide incision repair (NIR). The sequence is that of Apurinic-apyrimidinic endonuclease 1 from Plasmodium berghei (strain Anka).